Consider the following 206-residue polypeptide: Oligoribonuclease (206 aa).

An Exonuclease domain is found at 20-183 (LVWLDMEMTG…ADIHESIDEL (164 aa)). Tyrosine 141 is a catalytic residue.

The protein belongs to the oligoribonuclease family.

The protein resides in the cytoplasm. Its function is as follows. 3'-to-5' exoribonuclease specific for small oligoribonucleotides. This Burkholderia cenocepacia (strain HI2424) protein is Oligoribonuclease.